The sequence spans 154 residues: Prefoldin subunit 5 (154 aa).

The residue at position 2 (A2) is an N-acetylalanine. K42 bears the N6-acetyllysine mark. Residue S56 is modified to Phosphoserine.

It belongs to the prefoldin subunit alpha family. As to quaternary structure, heterohexamer of two PFD-alpha type and four PFD-beta type subunits. Binds to MYC; interacts with its N-terminal domain. In terms of tissue distribution, highly expressed in pancreas and skeletal muscle and moderately in other tissues.

Its subcellular location is the nucleus. The protein resides in the cytoplasm. Its function is as follows. Binds specifically to cytosolic chaperonin (c-CPN) and transfers target proteins to it. Binds to nascent polypeptide chain and promotes folding in an environment in which there are many competing pathways for nonnative proteins. Represses the transcriptional activity of MYC. The sequence is that of Prefoldin subunit 5 (PFDN5) from Homo sapiens (Human).